The sequence spans 660 residues: UvrABC system protein B (660 aa).

One can recognise a Helicase ATP-binding domain in the interval 27–414; that stretch reads NGVNEGKRHQ…TDEMVQQIIR (388 aa). 40-47 lines the ATP pocket; the sequence is GATGTGKT. A Beta-hairpin motif is present at residues 93-116; sequence YYDYYQPEAYVPSTDTFIEKDASI. The region spanning 431 to 593 is the Helicase C-terminal domain; the sequence is QIDDLLGEIQ…ITPTTINKKI (163 aa). Residues 603–622 form a disordered region; sequence NDETNEQQQTEVPKKMTKKE. Positions 624–659 constitute a UVR domain; that stretch reads EKTIANIEKEMKQAAKDLDFEKATELRDMLFELKAE.

The protein belongs to the UvrB family. In terms of assembly, forms a heterotetramer with UvrA during the search for lesions. Interacts with UvrC in an incision complex.

Its subcellular location is the cytoplasm. The UvrABC repair system catalyzes the recognition and processing of DNA lesions. A damage recognition complex composed of 2 UvrA and 2 UvrB subunits scans DNA for abnormalities. Upon binding of the UvrA(2)B(2) complex to a putative damaged site, the DNA wraps around one UvrB monomer. DNA wrap is dependent on ATP binding by UvrB and probably causes local melting of the DNA helix, facilitating insertion of UvrB beta-hairpin between the DNA strands. Then UvrB probes one DNA strand for the presence of a lesion. If a lesion is found the UvrA subunits dissociate and the UvrB-DNA preincision complex is formed. This complex is subsequently bound by UvrC and the second UvrB is released. If no lesion is found, the DNA wraps around the other UvrB subunit that will check the other stand for damage. The sequence is that of UvrABC system protein B from Staphylococcus saprophyticus subsp. saprophyticus (strain ATCC 15305 / DSM 20229 / NCIMB 8711 / NCTC 7292 / S-41).